Reading from the N-terminus, the 245-residue chain is High affinity immunoglobulin epsilon receptor subunit alpha (245 aa).

The signal sequence occupies residues 1–23 (MDTGGSARLCLALVLISLGVMLT). Residues 24–204 (ATQKSVVSLD…DYTIEYRWLQ (181 aa)) are Extracellular-facing. 2 consecutive Ig-like domains span residues 28 to 103 (SVVS…KPVY) and 113 to 181 (LQSS…LNKV). An intrachain disulfide couples C49 to C91. 7 N-linked (GlcNAc...) asparagine glycosylation sites follow: N52, N53, N58, N65, N123, N158, and N167. C130 and C174 are disulfide-bonded. The chain crosses the membrane as a helical span at residues 205-223 (LIFPSLAVILFAVDTGLWF). Over 224 to 245 (STHKQFESILKIQKTGKGKKKG) the chain is Cytoplasmic.

Tetramer of an alpha chain, a beta chain, and two disulfide linked gamma chains. Interacts with IGHE (via CH3 region). As to expression, expressed in leukocytes and pinealocytes at night (at protein level).

The protein localises to the cell membrane. The protein resides in the secreted. In terms of biological role, high-affinity receptor for immunoglobulin epsilon/IgE. Mediates IgE effector functions in myeloid cells. Upon IgE binding and antigen/allergen cross-linking initiates signaling pathways that lead to myeloid cell activation and differentiation. On mast cells, basophils and eosinophils stimulates the secretion of vasoactive amines, lipid mediators and cytokines that contribute to inflammatory response, tissue remodeling and cytotoxicity against microbes. Triggers the immediate hypersensitivity response to allergens as a host defense mechanism against helminth parasites, pathogenic bacteria and venom toxicity. When dysregulated, it can elicit harmful life-threatening allergic and anaphylactic reactions. The sequence is that of High affinity immunoglobulin epsilon receptor subunit alpha (Fcer1a) from Rattus norvegicus (Rat).